Consider the following 430-residue polypeptide: Serine--tRNA ligase (430 aa).

Residue 237 to 239 (TAE) coordinates L-serine. 268 to 270 (RSE) serves as a coordination point for ATP. An L-serine-binding site is contributed by Glu-291. Residue 355–358 (EISS) coordinates ATP. Position 391 (Ser-391) interacts with L-serine.

It belongs to the class-II aminoacyl-tRNA synthetase family. Type-1 seryl-tRNA synthetase subfamily. As to quaternary structure, homodimer. The tRNA molecule binds across the dimer.

It is found in the cytoplasm. It carries out the reaction tRNA(Ser) + L-serine + ATP = L-seryl-tRNA(Ser) + AMP + diphosphate + H(+). It catalyses the reaction tRNA(Sec) + L-serine + ATP = L-seryl-tRNA(Sec) + AMP + diphosphate + H(+). It functions in the pathway aminoacyl-tRNA biosynthesis; selenocysteinyl-tRNA(Sec) biosynthesis; L-seryl-tRNA(Sec) from L-serine and tRNA(Sec): step 1/1. Catalyzes the attachment of serine to tRNA(Ser). Is also able to aminoacylate tRNA(Sec) with serine, to form the misacylated tRNA L-seryl-tRNA(Sec), which will be further converted into selenocysteinyl-tRNA(Sec). The sequence is that of Serine--tRNA ligase from Salmonella paratyphi C (strain RKS4594).